The sequence spans 1415 residues: MAGLIKKQILKHLSRFTKNLSPDKINLSTLKGEGQLTNLELDEEVLQNMLDLPTWLAINKVFCNKAAIRIPWTKLKTHPISLSLDKVIMEMSTCEEPRSCNGPSPLVTASGQSEYGFAEKVVEGISLSVNSIIIRIRAKAFNASFELSQLRIYSVNPSWQHGDLRFTRIQDPQRGEVLTFKEINWQMIRIEADAIQSCDHEIMSAPVRLITNQSKIRITLKRRLKDCNVVASKLIFMLDDLLWVLTDSQLKAMVQYAKSLSEAIEKSTEQRKSMASETTQSPTPPVSSQQVKNPQTSTTPEQNNAILKLFRDFDVKETSYHLVISHLDLHICDDIHSKEKAFVRRVTGGAMQLSFSQLTVDYYPYHREGDGCSHWMHYGDATKTRCSWAQELLHEFNSNIEMLRQAVKDHNPSSPIRTVPNASQQYGQTGFDQNVKRSSPTAFGEPPKSNPLSSSFVVRLADFNIFQVSTADQCRSSPKTMISCNKKSLYLPQEMSAIHIEFTEYYFPDGKNFPIPSPNLYVQLNALQFTLDEKSVLWLNQFVLDLRQSLDQFVAMYKLSDNSKSDEHVDIRVDGLMLKFIIPSQKKQDCHPDQPAGISIQTSEMIGSNTRQTANCRRSDLEAIFQDFKDYDFYSKNFTSFPRSHDHFDILHPIFQRHAFEQDTKMHDIYKGLVAPTLDTNALSTSAARDIWAIHFTQFWVDYEGIKSGKGRPVVFIDSFPFSIWICQPRRFLQSQKRTLCDGDPLQSISKSESTDFVGRLQRKKLLKQYYSTELGGSNTPLQKSQSLDSSLANPPTCKQTDADIHVLAHVQKHVSLQINHYQYIFLLLLQESIKQILENVKKDVEEVTGKPDDENKISVGLLLKSADVSLLLLPLPEDNSKSPLPCEGSPVTDHKLPSPSEGVTGDLIINNNVDLINKAIFESDLKGDPQKIVATDPLLSKSSSDTELLKRSPPYLDSTADKDLLEAELAFGQQIDRNNLKEDPGANIDISSSFLIHPLNNHINSNGPDHALAEDQFASPLLPEVEKKQLVDTSGIPKERCLPNLSVSYKNMKRSPSQFSLDNISIDSNLLDEQMIESDGSDHLEVGMEDFSSLNYPCTAETSSVELRNEEYCVSSPDAISAETSQDSRQDLMSVLVLKVVGINCGIDIKGEDATICLQINRVVPNQLGNVSVWQYLNSRNTGSDQKSTTDERKSSPEISLRLEIGPSARRHSPLAAENGFLQCNVSNFSSEFLTSTLANIHHFVEEDSVPEIMPMKIQVQNARIHLQDDSPRNNNTDPDPEPVVLNIENLFVERRDDGSFWIRGSPDTSLNSPWNHKETSSILQLDCSKSHSTNSKSKTSKFTQTISEHTSLPEIPDVINNQAWKAAGISKEQLVEENECLKQELAKTKMALAESHMERDRLLHQLKRVHIEK.

Positions 3–94 (GLIKKQILKH…DKVIMEMSTC (92 aa)) constitute a Chorein N-terminal domain. 2 disordered regions span residues 267–300 (STEQ…STTP) and 882–904 (KSPL…SEGV). Residues 275–300 (ASETTQSPTPPVSSQQVKNPQTSTTP) show a composition bias toward polar residues. The stretch at 1367-1404 (KAAGISKEQLVEENECLKQELAKTKMALAESHMERDRL) forms a coiled coil.

Its subcellular location is the cytoplasm. The protein resides in the cytosol. It is found in the early endosome. Functionally, tube-forming lipid transport protein which mediates the transfer of lipids between membranes at organelle contact sites. Required for retrograde traffic of vesicle clusters in the early endocytic pathway to the Golgi complex. The sequence is that of Bridge-like lipid transfer protein family member 3B (bltp3b) from Xenopus laevis (African clawed frog).